The sequence spans 214 residues: 3-isopropylmalate dehydratase small subunit (214 aa).

The protein belongs to the LeuD family. LeuD type 1 subfamily. In terms of assembly, heterodimer of LeuC and LeuD.

The catalysed reaction is (2R,3S)-3-isopropylmalate = (2S)-2-isopropylmalate. It participates in amino-acid biosynthesis; L-leucine biosynthesis; L-leucine from 3-methyl-2-oxobutanoate: step 2/4. Functionally, catalyzes the isomerization between 2-isopropylmalate and 3-isopropylmalate, via the formation of 2-isopropylmaleate. This chain is 3-isopropylmalate dehydratase small subunit, found in Desulforapulum autotrophicum (strain ATCC 43914 / DSM 3382 / VKM B-1955 / HRM2) (Desulfobacterium autotrophicum).